Here is a 953-residue protein sequence, read N- to C-terminus: E3 ubiquitin-protein ligase ZNF598 (953 aa).

Residues 25–39 (KPSKSTRIKPTKPHH) show a composition bias toward basic residues. The disordered stretch occupies residues 25–47 (KPSKSTRIKPTKPHHTPSNSMES). The RING-type zinc-finger motif lies at 57–97 (CVLCCQDIDLFAVGKCDHPVCYRCSTKMRVLCEQKYCAVCR). The segment at 215–238 (PLCKFCDDRYLDNDELLKHLRRDH) adopts a C2H2-type zinc-finger fold. Disordered stretches follow at residues 299–779 (SKNR…EDSS) and 884–911 (EKQQQGSKPKKSKKKAWQTGTSSSSSLD). A compositionally biased stretch (low complexity) spans 371-380 (AAAMRASMAS). Over residues 381 to 409 (HQEERSHAQERSMLKPRREEKLEPDETRN) the composition is skewed to basic and acidic residues. Polar residues-rich tracts occupy residues 410–431 (NRSTARPTNDTQARSMKSNGSL) and 467–483 (LSGSVVSSPMTPAYTNQ). Serine 489 bears the Phosphoserine mark. Composition is skewed to low complexity over residues 508–518 (QSSAASAWSQA) and 536–553 (MTPMSSSSILSSTDPLPS). 2 stretches are compositionally biased toward polar residues: residues 555–564 (SVPQPLTASS) and 641–650 (LGSPSHTPET). The span at 655-666 (AHKENVPEKKPP) shows a compositional bias: basic and acidic residues. Polar residues predominate over residues 695-711 (SCTSFPENITSSKQPVT). Over residues 747-765 (LPPPPPPGLGPAVSKPPPG) the composition is skewed to pro residues. The segment covering 770 to 779 (PLNSNVEDSS) has biased composition (polar residues).

It belongs to the ZNF598/HEL2 family.

It is found in the cytoplasm. The protein localises to the cytosol. It catalyses the reaction S-ubiquitinyl-[E2 ubiquitin-conjugating enzyme]-L-cysteine + [acceptor protein]-L-lysine = [E2 ubiquitin-conjugating enzyme]-L-cysteine + N(6)-ubiquitinyl-[acceptor protein]-L-lysine.. Its pathway is protein modification; protein ubiquitination. In terms of biological role, E3 ubiquitin-protein ligase that plays a key role in the ribosome quality control (RQC), a pathway that takes place when a ribosome has stalled during translation, leading to degradation of nascent peptide chains. ZNF598 is activated when ribosomes are stalled within an mRNA following translation of prematurely polyadenylated mRNAs. Acts as a ribosome collision sensor: specifically recognizes and binds collided di-ribosome, which arises when a trailing ribosome encounters a slower leading ribosome, leading to terminally arrest translation. Following binding to colliding ribosomes, mediates monoubiquitination of 40S ribosomal proteins RPS10/eS10 and RPS3/uS3, and 'Lys-63'-linked polyubiquitination of RPS20/uS10. Polyubiquitination of RPS20/uS10 promotes recruitment of the RQT (ribosome quality control trigger) complex, which drives the disassembly of stalled ribosomes, followed by degradation of nascent peptides. This Danio rerio (Zebrafish) protein is E3 ubiquitin-protein ligase ZNF598.